Here is a 155-residue protein sequence, read N- to C-terminus: Ribonuclease H (155 aa).

The RNase H type-1 domain occupies 1-142 (MLKQVEIFTD…CDELARAAAM (142 aa)). Positions 10, 48, 70, and 134 each coordinate Mg(2+).

This sequence belongs to the RNase H family. Monomer. Mg(2+) is required as a cofactor.

Its subcellular location is the cytoplasm. It carries out the reaction Endonucleolytic cleavage to 5'-phosphomonoester.. Functionally, endonuclease that specifically degrades the RNA of RNA-DNA hybrids. This Escherichia fergusonii (strain ATCC 35469 / DSM 13698 / CCUG 18766 / IAM 14443 / JCM 21226 / LMG 7866 / NBRC 102419 / NCTC 12128 / CDC 0568-73) protein is Ribonuclease H.